A 208-amino-acid chain; its full sequence is Endo-1,4-beta-xylanase B (208 aa).

The signal sequence occupies residues 1–16 (MKVTAAFAGLLATTLA). A GH11 domain is found at 17 to 207 (APATELVTRS…GTGTASVTVS (191 aa)). The active-site Nucleophile is Glu-101. Glu-194 serves as the catalytic Proton donor.

Belongs to the glycosyl hydrolase 11 (cellulase G) family.

The protein resides in the secreted. It catalyses the reaction Endohydrolysis of (1-&gt;4)-beta-D-xylosidic linkages in xylans.. The protein operates within glycan degradation; xylan degradation. Its activity is regulated as follows. N-bromosuccinimide completely inhibits the catalytic activity. In terms of biological role, endo-1,4-beta-xylanase involved in the hydrolysis of xylan, a major structural heterogeneous polysaccharide found in plant biomass representing the second most abundant polysaccharide in the biosphere, after cellulose. The protein is Endo-1,4-beta-xylanase B (xynB) of Talaromyces purpureogenus (Soft rot fungus).